Reading from the N-terminus, the 1054-residue chain is Desmoglein-1 (1054 aa).

The first 23 residues, 1–23 (MNWHFLRTATVLLIFLVVVEINS), serve as a signal peptide directing secretion. Residues 24-49 (EFRIQVRDYNTKNGTIKWHSIRRQKR) constitute a propeptide that is removed on maturation. 3 N-linked (GlcNAc...) asparagine glycosylation sites follow: asparagine 36, asparagine 110, and asparagine 180. 4 consecutive Cadherin domains span residues 50 to 157 (EWIK…PPVF), 158 to 269 (SMST…IPYM), 270 to 389 (EPSS…RPGS), and 386 to 493 (RPGS…KDSE). At 50-566 (EWIKFAAACR…NLSDNVHFGP (517 aa)) the chain is on the extracellular side. A disordered region spans residues 487–554 (GWEKDSEKVT…QSNNNHQELG (68 aa)). Over residues 496 to 507 (TSSQNSGSSTGD) the composition is skewed to low complexity. Residues 508-517 (SSGGTGGGGR) are compositionally biased toward gly residues. Over residues 523–534 (GDTTTNTGGKTS) the composition is skewed to low complexity. The segment covering 542–554 (TQTQSNNNHQELG) has biased composition (polar residues). Asparagine 557 carries an N-linked (GlcNAc...) asparagine glycan. Residues 567-587 (AGIGLLIMGFLVLGLVPFLLM) form a helical membrane-spanning segment. Residues 588-1054 (CCDCGGAPGA…TKYSTVQYTK (467 aa)) are Cytoplasmic-facing. Desmoglein repeat repeat units follow at residues 830–856 (TYPSGPGVQHPMPIPDPLGYGNVTVTE), 857–886 (SYTTSGTLKPTVHVHDNRHASNVVVTERVV), 887–916 (GPISGTDLHGMLEMPDLRDGSNVIVTERVI), 917–944 (APSSSLPTSLTMPDPRESSNVVVTERVI), and 945–973 (RPASGMMGNLSIHPELSNAQNVIVTERVV). Residues 1018–1040 (GHVRSSSDHHFSQTLGSASPSTA) are disordered. Residues 1029 to 1040 (SQTLGSASPSTA) show a composition bias toward polar residues.

Binds to JUP/plakoglobin. Interacts with PKP2. Interacts with DSC3; there is evidence to suggest that the interaction promotes cell-cell adhesion of keratinocytes.

Its subcellular location is the cell membrane. It is found in the cell junction. The protein localises to the desmosome. It localises to the cytoplasm. The protein resides in the nucleus. In terms of biological role, component of intercellular desmosome junctions. Involved in the interaction of plaque proteins and intermediate filaments mediating cell-cell adhesion. This is Desmoglein-1 (DSG1) from Canis lupus familiaris (Dog).